Here is a 53-residue protein sequence, read N- to C-terminus: Insulin (53 aa).

Residues 1-30 constitute a propeptide, c peptide; the sequence is DVEPLLGFLSPKSGQENEVDDFPYKGQGEL. C38 and C43 are oxidised to a cystine.

This sequence belongs to the insulin family. Heterodimer of a B chain and an A chain linked by two disulfide bonds.

It localises to the secreted. In terms of biological role, insulin decreases blood glucose concentration. It increases cell permeability to monosaccharides, amino acids and fatty acids. It accelerates glycolysis, the pentose phosphate cycle, and glycogen synthesis in liver. This is Insulin (ins) from Anguilla anguilla (European freshwater eel).